Reading from the N-terminus, the 761-residue chain is BMP/retinoic acid-inducible neural-specific protein 1 (761 aa).

Positions 1 to 19 (MNWRFVELLYFLFIWGRIS) are cleaved as a signal peptide. An MACPF domain is found at 68–251 (RYKIYREFAR…FVQSALSYIM (184 aa)). N-linked (GlcNAc...) asparagine glycans are attached at residues Asn-156, Asn-433, Asn-443, Asn-553, Asn-599, Asn-631, and Asn-677.

The protein belongs to the BRINP family. As to expression, highly expressed in brain. Weakly expressed in heart, lung, skeletal muscle, kidney, thymus, prostate, testis and small intestine.

The protein resides in the cytoplasm. Plays a role in neurogenesis and brain development. May suppress cell cycle progression in postmitotic neurons by inhibiting G1/S transition. This Homo sapiens (Human) protein is BMP/retinoic acid-inducible neural-specific protein 1 (BRINP1).